A 367-amino-acid chain; its full sequence is MSVHRDAIRAARSLVVKVGTNALTTSSGVFDSSRLARLVDAIEARMKAGTDVVIVSSGAIAAGIEPLGLSLRPKDLATKQAAASVGQVALVNSWSAAFARYGRAVGQVLLTAQDISMRVQHTNAQRTLDRLRALHAVAIVNENDTVATNEIRFGDNDRLSAVVAHLVGAEALVLLSDINGLYDSDPRKNTGARFVPEVTGSADLDGVVASRGSSLGTGGMVSKMSSALLAADAGVPVLLAAAADAATALTDASVGTVFAARPDRMSARRFWLRYAADSVGSLTLDEGAVWAVVQQRRSLLAAGITAVSGRFYGGDVVELRGPDATMVARGVVAYDATELAAMMGRSTSELPCELRRPAVHADDLVSI.

Lys17 contributes to the ATP binding site. Positions 57, 144, and 156 each coordinate substrate. ATP-binding positions include 176 to 177 (SD) and 217 to 223 (TGGMVSK). The 79-residue stretch at 279–357 (VGSLTLDEGA…SELPCELRRP (79 aa)) folds into the PUA domain.

It belongs to the glutamate 5-kinase family.

The protein localises to the cytoplasm. It carries out the reaction L-glutamate + ATP = L-glutamyl 5-phosphate + ADP. The protein operates within amino-acid biosynthesis; L-proline biosynthesis; L-glutamate 5-semialdehyde from L-glutamate: step 1/2. Catalyzes the transfer of a phosphate group to glutamate to form L-glutamate 5-phosphate. This chain is Glutamate 5-kinase, found in Mycobacterium leprae (strain Br4923).